The following is a 335-amino-acid chain: Phosphate acyltransferase (335 aa).

Belongs to the PlsX family. Homodimer. Probably interacts with PlsY.

The protein resides in the cytoplasm. The catalysed reaction is a fatty acyl-[ACP] + phosphate = an acyl phosphate + holo-[ACP]. The protein operates within lipid metabolism; phospholipid metabolism. In terms of biological role, catalyzes the reversible formation of acyl-phosphate (acyl-PO(4)) from acyl-[acyl-carrier-protein] (acyl-ACP). This enzyme utilizes acyl-ACP as fatty acyl donor, but not acyl-CoA. The polypeptide is Phosphate acyltransferase (Leptospira interrogans serogroup Icterohaemorrhagiae serovar copenhageni (strain Fiocruz L1-130)).